A 422-amino-acid polypeptide reads, in one-letter code: Ferrochelatase, mitochondrial (422 aa).

The N-terminal 53 residues, 1–53 (MLSASANMAAALRAAGALLREPLVHGSSRACQPWRCQSGAAVAATTEKVHHAK), are a transit peptide targeting the mitochondrion. Lysine 56 bears the N6-acetyllysine mark. Arginine 114, tyrosine 122, and serine 129 together coordinate protoporphyrin IX. Lysine 137 is subject to N6-succinyllysine. Residue cysteine 195 participates in [2Fe-2S] cluster binding. Histidine 229 is a catalytic residue. Residue lysine 289 is modified to N6-acetyllysine; alternate. Position 289 is an N6-succinyllysine; alternate (lysine 289). Aspartate 382 is a catalytic residue. Residues cysteine 402, cysteine 405, and cysteine 410 each coordinate [2Fe-2S] cluster. Residue lysine 414 is modified to N6-acetyllysine; alternate. Residue lysine 414 is modified to N6-succinyllysine; alternate.

This sequence belongs to the ferrochelatase family. In terms of assembly, homodimer. Homotetramer. Interaction with PGRMC1; the interaction results in decreased FECH activity. Interacts with ABCB10 and SLC25A37; this interaction forms an oligomeric complex. Forms a complex with ABCB7 and ABCB10, where a dimeric FECH bridges ABCB7 and ABCB10 homodimers; this complex may be required for cellular iron homeostasis, mitochondrial function and heme biosynthesis. Interacts with ABCB7 and ABCB10. [2Fe-2S] cluster serves as cofactor. As to expression, erythroid and hepatic cells.

Its subcellular location is the mitochondrion inner membrane. The catalysed reaction is heme b + 2 H(+) = protoporphyrin IX + Fe(2+). The protein operates within porphyrin-containing compound metabolism; protoheme biosynthesis; protoheme from protoporphyrin-IX: step 1/1. Catalyzes the ferrous insertion into protoporphyrin IX. The polypeptide is Ferrochelatase, mitochondrial (Mus musculus (Mouse)).